The chain runs to 208 residues: Imidazole glycerol phosphate synthase subunit HisH (208 aa).

The 206-residue stretch at 1–206 folds into the Glutamine amidotransferase type-1 domain; sequence MIVIIDYDTG…KEVTESCKSS (206 aa). The active-site Nucleophile is Cys-79. Catalysis depends on residues His-181 and Glu-183.

As to quaternary structure, heterodimer of HisH and HisF.

It is found in the cytoplasm. It carries out the reaction 5-[(5-phospho-1-deoxy-D-ribulos-1-ylimino)methylamino]-1-(5-phospho-beta-D-ribosyl)imidazole-4-carboxamide + L-glutamine = D-erythro-1-(imidazol-4-yl)glycerol 3-phosphate + 5-amino-1-(5-phospho-beta-D-ribosyl)imidazole-4-carboxamide + L-glutamate + H(+). The enzyme catalyses L-glutamine + H2O = L-glutamate + NH4(+). It participates in amino-acid biosynthesis; L-histidine biosynthesis; L-histidine from 5-phospho-alpha-D-ribose 1-diphosphate: step 5/9. In terms of biological role, IGPS catalyzes the conversion of PRFAR and glutamine to IGP, AICAR and glutamate. The HisH subunit catalyzes the hydrolysis of glutamine to glutamate and ammonia as part of the synthesis of IGP and AICAR. The resulting ammonia molecule is channeled to the active site of HisF. The protein is Imidazole glycerol phosphate synthase subunit HisH of Listeria innocua serovar 6a (strain ATCC BAA-680 / CLIP 11262).